The chain runs to 446 residues: uncharacterized protein (446 aa).

4 helical membrane-spanning segments follow: residues 69–89, 98–118, 169–189, and 247–267; these read FWLW…VTYL, FFLV…VWLA, HSLW…LLLV, and GLLV…AWVV.

It localises to the membrane. This is an uncharacterized protein from Neisseria meningitidis serogroup B (strain ATCC BAA-335 / MC58).